We begin with the raw amino-acid sequence, 555 residues long: Sesquiterpene synthase 31 (555 aa).

The Mg(2+) site is built by Asp308, Asp312, Asp451, Thr455, and Glu459. The DDXXD motif signature appears at Asp308–Asp312.

This sequence belongs to the terpene synthase family. Tpsa subfamily. It depends on Mg(2+) as a cofactor. Requires Mn(2+) as cofactor. Expressed in stem and leaf trichomes. Detected in roots, fruits and flowers.

The protein resides in the cytoplasm. The catalysed reaction is (2E,6E)-farnesyl diphosphate = viridiflorene + diphosphate. It functions in the pathway secondary metabolite biosynthesis; terpenoid biosynthesis. Its function is as follows. Sesquiterpene synthase involved in the production of viridiflorene from (E,E)-farnesyl diphosphate (FPP). Has no activity with (Z,Z)-FPP. Can act with a low efficiency as a monoterpene synthase with geranyl diphosphate as substrate. The chain is Sesquiterpene synthase 31 from Solanum lycopersicum (Tomato).